Consider the following 384-residue polypeptide: 2-deoxy-scyllo-inosose synthase (384 aa).

NAD(+) is bound by residues Asp-42, 73–76 (EVHK), 105–109 (GITGN), 129–130 (TT), 140–142 (SLK), and 151–152 (KN). Lys-142 is an active-site residue. Residue Glu-184 participates in Co(2+) binding. Glu-244 is an active-site residue. Co(2+)-binding residues include His-247 and His-263.

The protein belongs to the sugar phosphate cyclases superfamily. DOI synthase family. The cofactor is NAD(+). Co(2+) is required as a cofactor.

The catalysed reaction is D-glucose 6-phosphate = 2-deoxy-L-scyllo-inosose + phosphate. It participates in metabolic intermediate biosynthesis; 2-deoxystreptamine biosynthesis; 2-deoxystreptamine from D-glucose 6-phosphate: step 1/4. The protein operates within antibiotic biosynthesis; lividomycin biosynthesis. Functionally, catalyzes the intramolecular carbocycle formation from D-glucose-6-phosphate to 2-deoxy-scyllo-inosose (DOI). The protein is 2-deoxy-scyllo-inosose synthase (livC) of Streptomyces lividus.